Here is a 201-residue protein sequence, read N- to C-terminus: Inner membrane protein YnbA (201 aa).

Over 1 to 43 (MTLYQIKPLFQSLLRPTMFWLYKHHVTANHITLAALALSLLTG) the chain is Periplasmic. A helical membrane pass occupies residues 44–64 (LLLMLAAQPILFLLLPIVLFI). Topologically, residues 65–84 (RMALNALDGMLARECNQQTR) are cytoplasmic. Residues 85–107 (LGAILNETGDVISDIALYLPFLF) form a helical membrane-spanning segment. The Periplasmic portion of the chain corresponds to 108–116 (LPESNASLV). A helical membrane pass occupies residues 117–139 (ILMLFCTILTEFCGLLAQTINGV). The Cytoplasmic segment spans residues 140-151 (RSYAGPFGKSDR). The helical transmembrane segment at 152-172 (ALIFGLWGLAVAIYPQWMQWN) threads the bilayer. The Periplasmic portion of the chain corresponds to 173 to 175 (NLL). Residues 176-196 (WSIASILLLWTAINRCRSVLL) traverse the membrane as a helical segment. Topologically, residues 197–201 (MSAEI) are cytoplasmic.

Its subcellular location is the cell inner membrane. This chain is Inner membrane protein YnbA (ynbA), found in Escherichia coli (strain K12).